The chain runs to 160 residues: Major pollen allergen Bet v 1-E (160 aa).

Residues lysine 55, tyrosine 82, tyrosine 84, and asparagine 101 each contribute to the brassinolide site.

The protein belongs to the BetVI family.

It is found in the cytoplasm. In terms of biological role, may be a general steroid carrier protein. This Betula pendula (European white birch) protein is Major pollen allergen Bet v 1-E (BETV1E).